The following is a 1701-amino-acid chain: Coiled-coil domain-containing protein 180 (1701 aa).

The interval 1 to 35 (MRGGENRPPARVQSSSEELELRHQSLDAFPGRRLP) is disordered. A coiled-coil region spans residues 171-198 (QRQAEHKRKSYESALASFQEEIAQVGKE). 3 disordered regions span residues 657-808 (EKPS…DKEE), 1272-1291 (HHCD…CGSR), and 1319-1354 (GFKR…KPNK). The segment covering 661–671 (QKRVKKLRKKQ) has biased composition (basic residues). Residues 672–682 (GSKEDMTRSEE) show a composition bias toward basic and acidic residues. The span at 683-692 (SISSGTSTAR) shows a compositional bias: polar residues. Residues 696-705 (EVEEENDQEM) show a composition bias toward acidic residues. Basic and acidic residues predominate over residues 755-766 (ENVKGQGEKKEE). Positions 757-804 (VKGQGEKKEESEEEDEKEEEEEEEKLEEEKEEKEAQEEQESLSVGEEE) form a coiled coil. Residues 767–808 (SEEEDEKEEEEEEEKLEEEKEEKEAQEEQESLSVGEEEDKEE) are compositionally biased toward acidic residues.

The polypeptide is Coiled-coil domain-containing protein 180 (CCDC180) (Homo sapiens (Human)).